The primary structure comprises 740 residues: Alpha-1,6-mannosylglycoprotein 6-beta-N-acetylglucosaminyltransferase A (740 aa).

The Cytoplasmic segment spans residues 1-13 (MAFFSPWKLSSQK). A helical; Signal-anchor for type II membrane protein transmembrane segment spans residues 14–30 (LGFFLVTFGFIWGMMLL). Residues 31 to 740 (HFTIQQRTQP…GQVALCKDCL (710 aa)) lie on the Lumenal side of the membrane. 3 N-linked (GlcNAc...) asparagine glycosylation sites follow: Asn109, Asn114, and Asn117. 9 disulfide bridges follow: Cys144–Cys182, Cys155–Cys195, Cys171–Cys337, Cys371–Cys625, Cys648–Cys723, Cys652–Cys725, Cys659–Cys712, Cys680–Cys701, and Cys736–Cys739. Residues 212 to 740 (NSLAEIRTDF…GQVALCKDCL (529 aa)) form a sufficient for catalytic activity region. Asn333 is a glycosylation site (N-linked (GlcNAc...) asparagine). 377–378 (DS) serves as a coordination point for substrate. Asn432 and Asn446 each carry an N-linked (GlcNAc...) asparagine glycan. A UDP-N-acetyl-alpha-D-glucosamine-binding site is contributed by Glu525. Residue Lys553 participates in substrate binding.

The protein belongs to the glycosyltransferase 18 family. Post-translationally, N-glycosylated. A secreted form is released from the membrane after cleavage by gamma-secretase. In terms of tissue distribution, detected in cerebellum.

The protein localises to the golgi apparatus membrane. It localises to the perikaryon. The protein resides in the secreted. It catalyses the reaction N(4)-{beta-D-GlcNAc-(1-&gt;2)-[beta-D-GlcNAc-(1-&gt;4)]-alpha-D-Man-(1-&gt;3)-[beta-D-GlcNAc-(1-&gt;2)-alpha-D-Man-(1-&gt;6)]-beta-D-Man-(1-&gt;4)-beta-D-GlcNAc-(1-&gt;4)-beta-D-GlcNAc}-L-asparaginyl-[protein] + UDP-N-acetyl-alpha-D-glucosamine = N(4)-{beta-D-GlcNAc-(1-&gt;2)-[beta-D-GlcNAc-(1-&gt;4)]-alpha-D-Man-(1-&gt;3)-[beta-D-GlcNAc-(1-&gt;2)-[beta-D-GlcNAc-(1-&gt;6)]-alpha-D-Man-(1-&gt;6)]-beta-D-Man-(1-&gt;4)-beta-D-GlcNAc-(1-&gt;4)-beta-D-GlcNAc}-L-asparaginyl-[protein] + UDP + H(+). Its pathway is protein modification; protein glycosylation. Functionally, catalyzes the addition of N-acetylglucosamine (GlcNAc) in beta 1-6 linkage to the alpha-linked mannose of biantennary N-linked oligosaccharides. Catalyzes an important step in the biosynthesis of branched, complex-type N-glycans, such as those found on EGFR, TGFR (TGF-beta receptor) and CDH2. Via its role in the biosynthesis of complex N-glycans, plays an important role in the activation of cellular signaling pathways, reorganization of the actin cytoskeleton, cell-cell adhesion and cell migration. MGAT5-dependent EGFR N-glycosylation enhances the interaction between EGFR and LGALS3 and thereby prevents rapid EGFR endocytosis and prolongs EGFR signaling. Required for efficient interaction between TGFB1 and its receptor. Enhances activation of intracellular signaling pathways by several types of growth factors, including FGF2, PDGF, IGF, TGFB1 and EGF. MGAT5-dependent CDH2 N-glycosylation inhibits CDH2-mediated homotypic cell-cell adhesion and contributes to the regulation of downstream signaling pathways. Promotes cell migration. Contributes to the regulation of the inflammatory response. MGAT5-dependent TCR N-glycosylation enhances the interaction between TCR and LGALS3, limits agonist-induced TCR clustering, and thereby dampens TCR-mediated responses to antigens. Required for normal leukocyte evasation and accumulation at sites of inflammation. Inhibits attachment of monocytes to the vascular endothelium and subsequent monocyte diapedesis. Promotes proliferation of umbilical vein endothelial cells and angiogenesis, at least in part by promoting the release of the growth factor FGF2 from the extracellular matrix. This Mus musculus (Mouse) protein is Alpha-1,6-mannosylglycoprotein 6-beta-N-acetylglucosaminyltransferase A (Mgat5).